We begin with the raw amino-acid sequence, 183 residues long: Ribosome rescue factor SmrB (183 aa).

A Smr domain is found at 98–173; it reads LDLHGLTQLQ…GDAALLVLIE (76 aa).

This sequence belongs to the SmrB family. Associates with collided ribosomes, but not with correctly translating polysomes.

Its function is as follows. Acts as a ribosome collision sensor. Detects stalled/collided disomes (pairs of ribosomes where the leading ribosome is stalled and a second ribosome has collided with it) and endonucleolytically cleaves mRNA at the 5' boundary of the stalled ribosome. Stalled/collided disomes form a new interface (primarily via the 30S subunits) that binds SmrB. Cleaved mRNA becomes available for tmRNA ligation, leading to ribosomal subunit dissociation and rescue of stalled ribosomes. This chain is Ribosome rescue factor SmrB, found in Escherichia coli O17:K52:H18 (strain UMN026 / ExPEC).